Reading from the N-terminus, the 1543-residue chain is MLEINEFNAIRISLASPEDILSWSHGEVTKPETINYRTLRPERDGLFCEKIFGPTRDWECYCGKYKRVRYKGIVCDKCGVEVTRSKVRRDRMGHIKLASPVSHIWFVKGTPSRLGLLLDISPRNLERVLYFASYIITDVDDLALGNVREQMKTDFGVRRKDLEEKIIEQRGEKATRLSKDLAAMDNAMEGTLERTHEQFARQRQEIEDEANALREHLEELIGIDALADEDIVYRGTVLLEENEPVRERSLEQLEQLIDQEREKLEQRREYEIENVRLLADGERDQRQSVADAEQERLTTALIKQLEDLNKEEKDKLDRLDDIQLHRIISENEYRILRDLAPYTFKADMGAGAVRDIVSMVDLDELSNQMQAEVQSSSGQRRKKATKRLRVVEAFRKSGNRPEWMIMTVLPVIPPDLRPMVQLDGGRFATSDLNDLYRRVINRNNRLKRLMELNAPEIIVRNEKRMLQEAVDALIDNGRRGRPVSGKGKHRLKSLSDMLKGKQGRFRQNLLGKRVDYSGRSVIVVGPTLQLHQCGLPKKMALELFKPFVMRRLVDKGFAHNIKSAKRFVERVRPEVWDVLEEVIKDYLVLLNRAPSLHRLSIQAFEAKLIEGSAIQLHPLVCAAFNADFDGDQMAVHVPLSRKAQEEARRRMISTYNLLSPATGDPIITPSQDIVLGCFYLTQVRPGAKGGGKRFGSIDEALLAYTNGVVHIQAPVWIVIEDYILPGSDLREKELPSLDGVTPRVLIETSVGRIIFNNALRYQGEPKAGENGYRSPLHYRNFLVGKSGLKALIADCYRFHSQRENIIADVYQELIERFGPETSEESLLRFYASERTARLADRIKALGFKHATLGGMTFSASDVEVPDTKDAIVQETYKKVQDIEKMQRRGLITDDERYREVVTAWLDATNQIKVEVQRSLNPFGPVSMMSTSGARGNVEQIRQMAGMRGLTTDPTGRIIELPITANFREGLSVIEYFISTHGGRKGLADTALRTADAGYLTRRLVDVAQDVIVTIEDCGTTEGMWIRVSRDILASVEDRIVGRVTVAPVTNPVTGEVIFDTDSEILEDDGKHIANVLKSLDKEAQAEFGIYVRSVLTCNADYGICRKCYGRNLATGKMVEIGEAVGIIAAQSIGEPGTQLTLRTFHTGGVATDTDITQGLPRVQEIFEARIPKGKAVLAQIAGRVQIVREEEGIRRLRIVSEEVYTDEQMLPKDYRVVVKNGDAVEIGNLLAESNVDGDGRAPLVAGLAGNVYVDDDRLVIQAKDIEEHEEVIAHAARLRVKDGDLVQVGQQMTEGSSDPQEMLQLRGREAVQEYLTNEAQKVYRSQGVGINDKHIEVIVRQMLRRVRIEEPGDTELLPGELVELHELNRINASIVSQGGDPALAVPVLLGITKASLSTDSFLSAASFQETTRVLTEAAVNGKIDYLRGLKENVVIGKLIPAGTGMEQRRKLAEEAALRVAQITSTPADREVPAATPAPAVMSEPKPAPPRSFDEALNAVTNIDSGNGPKDDLFAQAMARLQAEEGRKPTLSELLGTDEDEENV.

Residues Cys60, Cys62, Cys75, and Cys78 each coordinate Zn(2+). Positions 627, 629, and 631 each coordinate Mg(2+). 4 residues coordinate Zn(2+): Cys1017, Cys1097, Cys1104, and Cys1107. Disordered stretches follow at residues 1466-1490 (PADR…APPR) and 1522-1543 (AEEG…EENV).

Belongs to the RNA polymerase beta' chain family. In terms of assembly, the RNAP catalytic core consists of 2 alpha, 1 beta, 1 beta' and 1 omega subunit. When a sigma factor is associated with the core the holoenzyme is formed, which can initiate transcription. The cofactor is Mg(2+). Zn(2+) serves as cofactor.

It catalyses the reaction RNA(n) + a ribonucleoside 5'-triphosphate = RNA(n+1) + diphosphate. In terms of biological role, DNA-dependent RNA polymerase catalyzes the transcription of DNA into RNA using the four ribonucleoside triphosphates as substrates. This is DNA-directed RNA polymerase subunit beta' from Herpetosiphon aurantiacus (strain ATCC 23779 / DSM 785 / 114-95).